The sequence spans 210 residues: Thymidylate kinase (210 aa).

Residue 10 to 17 (GLEGAGKS) participates in ATP binding.

The protein belongs to the thymidylate kinase family.

The catalysed reaction is dTMP + ATP = dTDP + ADP. In terms of biological role, phosphorylation of dTMP to form dTDP in both de novo and salvage pathways of dTTP synthesis. The protein is Thymidylate kinase of Haemophilus influenzae (strain PittGG).